A 229-amino-acid chain; its full sequence is Urease accessory protein UreF (229 aa).

The protein belongs to the UreF family. As to quaternary structure, ureD, UreF and UreG form a complex that acts as a GTP-hydrolysis-dependent molecular chaperone, activating the urease apoprotein by helping to assemble the nickel containing metallocenter of UreC. The UreE protein probably delivers the nickel.

The protein resides in the cytoplasm. Functionally, required for maturation of urease via the functional incorporation of the urease nickel metallocenter. The sequence is that of Urease accessory protein UreF from Corynebacterium efficiens (strain DSM 44549 / YS-314 / AJ 12310 / JCM 11189 / NBRC 100395).